The primary structure comprises 106 residues: Large ribosomal subunit protein uL24 (106 aa).

Belongs to the universal ribosomal protein uL24 family. As to quaternary structure, part of the 50S ribosomal subunit.

One of two assembly initiator proteins, it binds directly to the 5'-end of the 23S rRNA, where it nucleates assembly of the 50S subunit. Functionally, one of the proteins that surrounds the polypeptide exit tunnel on the outside of the subunit. This is Large ribosomal subunit protein uL24 from Clostridium acetobutylicum (strain ATCC 824 / DSM 792 / JCM 1419 / IAM 19013 / LMG 5710 / NBRC 13948 / NRRL B-527 / VKM B-1787 / 2291 / W).